We begin with the raw amino-acid sequence, 229 residues long: General odorant-binding protein 69 (229 aa).

A signal peptide spans 1 to 20; the sequence is MDRLLLVLLSSASLLLTVYG. Cysteines 66 and 106 form a disulfide.

The protein belongs to the PBP/GOBP family.

The protein resides in the secreted. Present in the aqueous fluid surrounding olfactory sensory dendrites and are thought to aid in the capture and transport of hydrophobic odorants into and through this fluid. The sequence is that of General odorant-binding protein 69 (Obp69) from Anopheles gambiae (African malaria mosquito).